Here is a 146-residue protein sequence, read N- to C-terminus: Small ribosomal subunit protein uS9x (146 aa).

It belongs to the universal ribosomal protein uS9 family.

It localises to the cytoplasm. In Arabidopsis thaliana (Mouse-ear cress), this protein is Small ribosomal subunit protein uS9x (RPS16C).